We begin with the raw amino-acid sequence, 824 residues long: Leucine--tRNA ligase (824 aa).

A 'HIGH' region motif is present at residues 40–50 (PYPSGKIHMGH). A 'KMSKS' region motif is present at residues 580-584 (KMSKS). An ATP-binding site is contributed by Lys-583.

Belongs to the class-I aminoacyl-tRNA synthetase family.

The protein localises to the cytoplasm. The enzyme catalyses tRNA(Leu) + L-leucine + ATP = L-leucyl-tRNA(Leu) + AMP + diphosphate. The sequence is that of Leucine--tRNA ligase from Alkaliphilus metalliredigens (strain QYMF).